The following is a 556-amino-acid chain: tRNA (guanine(37)-N(1))-methyltransferase (556 aa).

Residues 1-30 (MIITTKALTVLPHSGLRTTHRSLLARLRHY) constitute a mitochondrion transit peptide. S-adenosyl-L-methionine contacts are provided by residues histidine 249, 287–288 (DL), 315–316 (DA), and asparagine 346. Disordered stretches follow at residues 444–465 (QHEE…KMKD) and 524–556 (KKAA…EMQM). Composition is skewed to basic and acidic residues over residues 454–465 (EEAKRPSNKMKD) and 540–549 (SKPDTKKIEA).

It belongs to the class I-like SAM-binding methyltransferase superfamily. TRM5/TYW2 family. In terms of assembly, monomer.

Its subcellular location is the mitochondrion matrix. The protein resides in the nucleus. It is found in the cytoplasm. It catalyses the reaction guanosine(37) in tRNA + S-adenosyl-L-methionine = N(1)-methylguanosine(37) in tRNA + S-adenosyl-L-homocysteine + H(+). In terms of biological role, specifically methylates the N1 position of guanosine-37 in various cytoplasmic and mitochondrial tRNAs. Methylation is not dependent on the nature of the nucleoside 5' of the target nucleoside. This is the first step in the biosynthesis of wybutosine (yW), a modified base adjacent to the anticodon of tRNAs and required for accurate decoding. The protein is tRNA (guanine(37)-N(1))-methyltransferase of Anopheles gambiae (African malaria mosquito).